A 170-amino-acid chain; its full sequence is Putative invertase inhibitor (170 aa).

The signal sequence occupies residues 1–14 (MKLSFSLCIFFLIS). 2 disulfides stabilise this stretch: Cys22–Cys37 and Cys93–Cys133.

It belongs to the PMEI family. In terms of tissue distribution, expressed in pollen (at protein level). Expressed in pollen.

The polypeptide is Putative invertase inhibitor (Platanus orientalis (Oriental plane-tree)).